A 308-amino-acid polypeptide reads, in one-letter code: Aspartate carbamoyltransferase catalytic subunit (308 aa).

Carbamoyl phosphate is bound by residues Arg-49 and Thr-50. Lys-77 serves as a coordination point for L-aspartate. Carbamoyl phosphate-binding residues include Arg-99, His-127, and Gln-130. L-aspartate is bound by residues Arg-160 and Arg-211. Carbamoyl phosphate is bound by residues Ala-252 and Pro-253.

The protein belongs to the aspartate/ornithine carbamoyltransferase superfamily. ATCase family. As to quaternary structure, heterododecamer (2C3:3R2) of six catalytic PyrB chains organized as two trimers (C3), and six regulatory PyrI chains organized as three dimers (R2).

It catalyses the reaction carbamoyl phosphate + L-aspartate = N-carbamoyl-L-aspartate + phosphate + H(+). The protein operates within pyrimidine metabolism; UMP biosynthesis via de novo pathway; (S)-dihydroorotate from bicarbonate: step 2/3. Its function is as follows. Catalyzes the condensation of carbamoyl phosphate and aspartate to form carbamoyl aspartate and inorganic phosphate, the committed step in the de novo pyrimidine nucleotide biosynthesis pathway. In Bacillus caldolyticus, this protein is Aspartate carbamoyltransferase catalytic subunit.